The sequence spans 565 residues: FACT complex subunit ctc-1 (565 aa).

2 disordered regions span residues 151–173 (GNDG…ASAG) and 477–565 (LGDD…KKTA). Gly residues predominate over residues 152-165 (NDGGKSNGHSGTGG). 3 stretches are compositionally biased toward acidic residues: residues 478–489 (GDDDMASSDEEA), 500–522 (DEDE…AEEY), and 532–553 (GSEE…DDDE).

The protein belongs to the SSRP1 family. In terms of assembly, forms a stable heterodimer with ctc-2/spt16. The dimer of ctc-1 and ctc-2 weakly associates with multiple molecules of nhp-1/nhp6 to form the FACT complex.

The protein resides in the nucleus. The protein localises to the chromosome. Component of the FACT complex, a general chromatin factor that acts to reorganize nucleosomes. The FACT complex is involved in multiple processes that require DNA as a template such as mRNA elongation, DNA replication and DNA repair. During transcription elongation the FACT complex acts as a histone chaperone that both destabilizes and restores nucleosomal structure. It facilitates the passage of RNA polymerase II and transcription by promoting the dissociation of one histone H2A-H2B dimer from the nucleosome, then subsequently promotes the reestablishment of the nucleosome following the passage of RNA polymerase II. This Neurospora crassa (strain ATCC 24698 / 74-OR23-1A / CBS 708.71 / DSM 1257 / FGSC 987) protein is FACT complex subunit ctc-1 (ctc-1).